A 137-amino-acid chain; its full sequence is Ribosomal RNA small subunit methyltransferase G (137 aa).

Residues glycine 75, phenylalanine 80, and 126–127 (AE) contribute to the S-adenosyl-L-methionine site.

Belongs to the methyltransferase superfamily. RNA methyltransferase RsmG family.

The protein resides in the cytoplasm. Specifically methylates the N7 position of a guanine in 16S rRNA. The sequence is that of Ribosomal RNA small subunit methyltransferase G from Mycoplasma mycoides subsp. mycoides SC (strain CCUG 32753 / NCTC 10114 / PG1).